Here is a 255-residue protein sequence, read N- to C-terminus: Imidazole glycerol phosphate synthase subunit HisF (255 aa).

Residues aspartate 11 and aspartate 130 contribute to the active site.

It belongs to the HisA/HisF family. Heterodimer of HisH and HisF.

Its subcellular location is the cytoplasm. The enzyme catalyses 5-[(5-phospho-1-deoxy-D-ribulos-1-ylimino)methylamino]-1-(5-phospho-beta-D-ribosyl)imidazole-4-carboxamide + L-glutamine = D-erythro-1-(imidazol-4-yl)glycerol 3-phosphate + 5-amino-1-(5-phospho-beta-D-ribosyl)imidazole-4-carboxamide + L-glutamate + H(+). It functions in the pathway amino-acid biosynthesis; L-histidine biosynthesis; L-histidine from 5-phospho-alpha-D-ribose 1-diphosphate: step 5/9. IGPS catalyzes the conversion of PRFAR and glutamine to IGP, AICAR and glutamate. The HisF subunit catalyzes the cyclization activity that produces IGP and AICAR from PRFAR using the ammonia provided by the HisH subunit. The protein is Imidazole glycerol phosphate synthase subunit HisF of Rhodopseudomonas palustris (strain HaA2).